Reading from the N-terminus, the 684-residue chain is TBC1 domain family member 23 (684 aa).

Positions 44 to 225 constitute a Rab-GAP TBC domain; sequence PLPAELRAKV…AIWDGYLQQA (182 aa). Residue Ser-300 is modified to Phosphoserine. In terms of domain architecture, Rhodanese spans 334 to 446; the sequence is EGVRFFVVDC…LQQHLADINV (113 aa). Phosphoserine is present on residues Ser-469, Ser-474, and Ser-507. The residue at position 514 (Thr-514) is a Phosphothreonine. The tract at residues 514–558 is may mediate the interaction with C17orf75, FAM91A1 and WDR11; that stretch reads TPVDRHVSSSDRVGKPYRGVKPVFSIGDEEEYDTDEIDSSSMSDD. The segment at 514-684 is may mediate the interaction with WASHC1; the sequence is TPVDRHVSSS…IMKVLDALES (171 aa). Residue Ser-556 is modified to Phosphoserine. The may mediate the interaction with FKBP15 and WASHC2; required for endosome to Golgi trafficking stretch occupies residues 559–684; that stretch reads DRKEVVNIQT…IMKVLDALES (126 aa).

As to quaternary structure, directly interacts with GOLGA1 and GOLGA4. Interacts with FAM91A1, C17ORF75 and WDR11; the interaction recruits TBC1D23 to AP-1-derived vesicles. Directly interacts with WASHC1 and WASHC2/FAM21. Interacts with FKBP15.

The protein resides in the golgi apparatus. The protein localises to the trans-Golgi network. It localises to the cytoplasmic vesicle. Functionally, putative Rab GTPase-activating protein which plays a role in vesicular trafficking. Involved in endosome-to-Golgi trafficking. Acts as a bridging protein by binding simultaneously to golgins, including GOLGA1 and GOLGA4, located at the trans-Golgi, and to the WASH complex, located on endosome-derived vesicles. Together with WDR11 complex facilitates the golgin-mediated capture of vesicles generated using AP-1. Plays a role in brain development, including in cortical neuron positioning. May also be important for neurite outgrowth, possibly through its involvement in membrane trafficking and cargo delivery, 2 processes which are essential for axonal and dendritic growth. May act as a general inhibitor of innate immunity signaling, strongly inhibiting multiple TLR and dectin/CLEC7A-signaling pathways. Does not alter initial activation events, but instead affects maintenance of inflammatory gene expression several hours after bacterial lipopolysaccharide (LPS) challenge. The protein is TBC1 domain family member 23 (Tbc1d23) of Mus musculus (Mouse).